The sequence spans 494 residues: Probable cytosol aminopeptidase (494 aa).

The Mn(2+) site is built by lysine 260 and aspartate 265. The active site involves lysine 272. Residues aspartate 283, aspartate 342, and glutamate 344 each coordinate Mn(2+). Arginine 346 is an active-site residue.

This sequence belongs to the peptidase M17 family. Mn(2+) is required as a cofactor.

The protein localises to the cytoplasm. It catalyses the reaction Release of an N-terminal amino acid, Xaa-|-Yaa-, in which Xaa is preferably Leu, but may be other amino acids including Pro although not Arg or Lys, and Yaa may be Pro. Amino acid amides and methyl esters are also readily hydrolyzed, but rates on arylamides are exceedingly low.. It carries out the reaction Release of an N-terminal amino acid, preferentially leucine, but not glutamic or aspartic acids.. Functionally, presumably involved in the processing and regular turnover of intracellular proteins. Catalyzes the removal of unsubstituted N-terminal amino acids from various peptides. The polypeptide is Probable cytosol aminopeptidase (Bacillus cereus (strain Q1)).